The primary structure comprises 74 residues: Anionic peptide clone 10 (74 aa).

Residues 1–24 form the signal peptide; the sequence is MVSKSLIVLLLVSVLVSTFFTTEA.

The protein belongs to the non-disulfide-bridged peptide (NDBP) superfamily. Long chain multifunctional peptide (group 2) family. In terms of tissue distribution, expressed by the venom gland.

It is found in the secreted. Functionally, may be an antimicrobial peptide. The sequence is that of Anionic peptide clone 10 from Tityus costatus (Brazilian scorpion).